The following is a 138-amino-acid chain: Prefoldin subunit alpha (138 aa).

This sequence belongs to the prefoldin subunit alpha family. Heterohexamer of two alpha and four beta subunits.

It is found in the cytoplasm. Molecular chaperone capable of stabilizing a range of proteins. Seems to fulfill an ATP-independent, HSP70-like function in archaeal de novo protein folding. This chain is Prefoldin subunit alpha, found in Methanosphaera stadtmanae (strain ATCC 43021 / DSM 3091 / JCM 11832 / MCB-3).